The sequence spans 248 residues: PF03932 family protein CutC (248 aa).

It belongs to the CutC family. As to quaternary structure, homodimer.

Its subcellular location is the cytoplasm. The protein is PF03932 family protein CutC of Salmonella schwarzengrund (strain CVM19633).